The primary structure comprises 64 residues: Potassium channel toxin kappa-KTx 4.1 (64 aa).

Residues 1–26 form the signal peptide; it reads MKSTLMTASLLILVVLFIIDYASVYA. The propeptide occupies 27–38; sequence EFIDGEISLERE. Disulfide bonds link C43/C61 and C47/C57.

This sequence belongs to the short scorpion toxin superfamily. Potassium channel inhibitor kappa-KTx family. Kappa-KTx 4 subfamily. In terms of tissue distribution, expressed by the venom gland.

The protein localises to the secreted. Potassium channel inhibitor (Kv). The chain is Potassium channel toxin kappa-KTx 4.1 from Heterometrus petersii (Asian forest scorpion).